Reading from the N-terminus, the 181-residue chain is MTEYKLVVVGAGGVGKSALTIQLIQNHFVDEYDPTIEDSYRKQVVIDGETCLLDILDTAGQEEYSAMRDQYMRTGEGFLLVFAVNSAKSFEDIGTYREQIKRVKDAEEVPMVLVGNKCDLPSWNVAKQYGIPYIETSAKTRMGVDDAFYTLVREIRKDKDNKGRKGRKTNKPNRRFKCKML.

10–17 (GAGGVGKS) contacts GTP. An Effector region motif is present at residues 32–40 (YDPTIEDSY). Residues 57-61 (DTAGQ) and 116-119 (NKCD) each bind GTP. Position 178 is a cysteine methyl ester (Cys-178). Residue Cys-178 is the site of S-geranylgeranyl cysteine attachment. Residues 179–181 (KML) constitute a propeptide, removed in mature form.

It belongs to the small GTPase superfamily. Ras family.

It is found in the cell membrane. The enzyme catalyses GTP + H2O = GDP + phosphate + H(+). Alternates between an inactive form bound to GDP and an active form bound to GTP. Activated by a guanine nucleotide-exchange factor (GEF) and inactivated by a GTPase-activating protein (GAP). Ras proteins bind GDP/GTP and possess intrinsic GTPase activity. Plays a role in eye development by regulating cell growth, survival of postmitotic ommatidial cells and differentiation of photoreceptor cells. During larval development, mediates Ptth/tor signaling leading to the production of ecdysone, a hormone required for the initiation of metamorphosis. In Drosophila mojavensis (Fruit fly), this protein is Ras-like protein 1.